A 510-amino-acid chain; its full sequence is Chromosomal replication initiator protein DnaA (510 aa).

The tract at residues 1 to 74 is domain I, interacts with DnaA modulators; sequence MHTDLWERGC…EATLSELAGK (74 aa). Residues 74-173 form a domain II region; sequence KPVRLELSLL…PTLSPAVSRG (100 aa). Positions 125-168 are disordered; the sequence is ARHDPQSVVPTPGGSANGRAAPRVGEPGGPVGTSTLPVAPTLSP. The tract at residues 174 to 390 is domain III, AAA+ region; sequence RLNPALTFDT…GALRKVLAYS (217 aa). Residues Gly218, Gly220, Lys221, and Thr222 each contribute to the ATP site. Residues 391–510 are domain IV, binds dsDNA; the sequence is RFSHKEISIN…LHVLEQTLKG (120 aa).

It belongs to the DnaA family. As to quaternary structure, oligomerizes as a right-handed, spiral filament on DNA at oriC.

It localises to the cytoplasm. Its function is as follows. Plays an essential role in the initiation and regulation of chromosomal replication. ATP-DnaA binds to the origin of replication (oriC) to initiate formation of the DNA replication initiation complex once per cell cycle. Binds the DnaA box (a 9 base pair repeat at the origin) and separates the double-stranded (ds)DNA. Forms a right-handed helical filament on oriC DNA; dsDNA binds to the exterior of the filament while single-stranded (ss)DNA is stabiized in the filament's interior. The ATP-DnaA-oriC complex binds and stabilizes one strand of the AT-rich DNA unwinding element (DUE), permitting loading of DNA polymerase. After initiation quickly degrades to an ADP-DnaA complex that is not apt for DNA replication. Binds acidic phospholipids. The protein is Chromosomal replication initiator protein DnaA of Leptothrix cholodnii (strain ATCC 51168 / LMG 8142 / SP-6) (Leptothrix discophora (strain SP-6)).